The sequence spans 221 residues: uncharacterized protein (221 aa).

A DNA-binding region (H-T-H motif) is located at residues Y77–N96.

This sequence to E.coli YdcF.

Functionally, the imp locus inhibits the extrachromosomal maintenance of the streptomyces plasmid SLP1. May function as a transcriptional activator. This is an uncharacterized protein from Streptomyces coelicolor (strain ATCC BAA-471 / A3(2) / M145).